The primary structure comprises 104 residues: Naphthalene 1,2-dioxygenase system, ferredoxin component (104 aa).

The region spanning 6–101 (IEAVALSDIL…VKIENLRVMI (96 aa)) is the Rieske domain. [2Fe-2S] cluster-binding residues include Cys-45, His-47, Cys-64, and His-67.

This sequence belongs to the bacterial ring-hydroxylating dioxygenase ferredoxin component family. The naphthalene dioxygenase (NDO) multicomponent enzyme system is composed of an electron transfer component and a dioxygenase component (iron sulfur protein (ISP)). The electron transfer component is composed of a ferredoxin reductase (NdoR) and a ferredoxin (NdoA), and the dioxygenase component is formed of a heterohexamer (trimer of heterodimers) of three large alpha subunits (NdoB) and three small beta subunits (NdoC). [2Fe-2S] cluster is required as a cofactor.

The protein operates within aromatic compound metabolism; naphthalene degradation. Its function is as follows. Component of the naphthalene dioxygenase (NDO) multicomponent enzyme system which catalyzes the incorporation of both atoms of molecular oxygen into naphthalene to form cis-(1R,2S)-dihydroxy-1,2-dihydronaphthalene. Functions as an intermediate electron transfer protein via a specific interaction with iron sulfur protein components (ISP) (NdoB and NdoC). Also able to catalyze the cis-dihydroxylation of biphenyl and phenanthrene. The protein is Naphthalene 1,2-dioxygenase system, ferredoxin component of Pseudomonas putida (Arthrobacter siderocapsulatus).